A 1173-amino-acid chain; its full sequence is Paired amphipathic helix protein Sin3-like 6 (1173 aa).

Residues 40-75 (NQSAGESGRRLKMKRAREDVHTDTQKRKPEVSSRGE) form a disordered region. The segment covering 55-75 (AREDVHTDTQKRKPEVSSRGE) has biased composition (basic and acidic residues). PAH domains follow at residues 79-148 (LPRT…LPKG) and 162-232 (IRVD…LPNC). Disordered stretches follow at residues 236-337 (APST…TTKY), 655-697 (TASG…TAQP), and 740-813 (KHEL…ENNK). Composition is skewed to basic and acidic residues over residues 264–276 (CKLE…SDQR) and 301–319 (RDYE…RTEK). Over residues 320 to 337 (SAASGSQDIGNHKSTTKY) the composition is skewed to polar residues. Over residues 750–765 (PTASREQSNFEVNGQN) the composition is skewed to polar residues. Residues 778-810 (RSNKDKQSCDKKGAKNKTRAEDDKQENCHKLSE) are compositionally biased toward basic and acidic residues.

It localises to the nucleus. In terms of biological role, acts as a transcriptional repressor. Plays roles in regulating gene expression and genome stability. This chain is Paired amphipathic helix protein Sin3-like 6 (SNL6), found in Arabidopsis thaliana (Mouse-ear cress).